We begin with the raw amino-acid sequence, 593 residues long: Capsid protein 1 (593 aa).

Belongs to the NCLDV major capsid protein family.

The protein resides in the virion. The sequence is that of Capsid protein 1 from Acanthamoeba polyphaga mimivirus (APMV).